Here is a 551-residue protein sequence, read N- to C-terminus: Glucose-6-phosphate isomerase 2 (551 aa).

Glu353 (proton donor) is an active-site residue. Catalysis depends on residues His384 and Lys512.

Belongs to the GPI family.

It localises to the cytoplasm. It catalyses the reaction alpha-D-glucose 6-phosphate = beta-D-fructose 6-phosphate. Its pathway is carbohydrate biosynthesis; gluconeogenesis. It participates in carbohydrate degradation; glycolysis; D-glyceraldehyde 3-phosphate and glycerone phosphate from D-glucose: step 2/4. Functionally, catalyzes the reversible isomerization of glucose-6-phosphate to fructose-6-phosphate. The sequence is that of Glucose-6-phosphate isomerase 2 from Colwellia psychrerythraea (strain 34H / ATCC BAA-681) (Vibrio psychroerythus).